Here is a 295-residue protein sequence, read N- to C-terminus: sn-glycerol-3-phosphate transport system permease protein UgpA (295 aa).

At 1–11 the chain is on the cytoplasmic side; it reads MSSSRPVFRSR. The chain crosses the membrane as a helical span at residues 12-32; sequence WLPYLLVAPQLIITVIFFIWP. The Periplasmic portion of the chain corresponds to 33 to 80; it reads AGEALWYSLQSVDPFGFSSQFVGLDNFVTLFHDSYYLDAFWTTIKFST. Positions 76-284 constitute an ABC transmembrane type-1 domain; sequence IKFSTFVTVS…FLVIVLTVVQ (209 aa). Residues 81 to 101 form a helical membrane-spanning segment; it reads FVTVSGLLVSLFFAALVEYIV. The Cytoplasmic portion of the chain corresponds to 102 to 109; it reads RGSRFYQT. Residues 110–130 form a helical membrane-spanning segment; the sequence is LMLLPYAVAPAVAAVLWIFLF. The Periplasmic segment spans residues 131 to 156; sequence NPGRGLITHFLAEFGYDWNHAQNSGQ. Residues 157–177 form a helical membrane-spanning segment; it reads AMFLVVFASVWKQISYNFLFF. Residues 178 to 207 are Cytoplasmic-facing; that stretch reads YAALQSIPRSLIEAAAIDGAGPIRRFFKIA. The chain crosses the membrane as a helical span at residues 208-228; that stretch reads LPLIAPVSFFLLVVNLVYAFF. The Periplasmic portion of the chain corresponds to 229–262; the sequence is DTFPVIDAATSGGPVQATTTLIYKIYREGFTGLD. The helical transmembrane segment at 263–283 threads the bilayer; sequence LASSAAQSVVLMFLVIVLTVV. Residues 284-295 lie on the Cytoplasmic side of the membrane; that stretch reads QFRYVESKVRYQ.

Belongs to the binding-protein-dependent transport system permease family. UgpAE subfamily. In terms of assembly, the complex is composed of two ATP-binding proteins (UgpC), two transmembrane proteins (UgpA and UgpE) and a solute-binding protein (UgpB).

Its subcellular location is the cell inner membrane. Functionally, part of the ABC transporter complex UgpBAEC involved in sn-glycerol-3-phosphate (G3P) import. Probably responsible for the translocation of the substrate across the membrane. The polypeptide is sn-glycerol-3-phosphate transport system permease protein UgpA (ugpA) (Escherichia coli (strain UTI89 / UPEC)).